We begin with the raw amino-acid sequence, 400 residues long: Protein phyllopod (400 aa).

An interaction with sina region spans residues 109-127 (QERTKLRPVAMVRPTVRVQ). The disordered stretch occupies residues 125 to 145 (RVQPQSQPQLQPQVPINPTPA). The segment covering 127–138 (QPQSQPQLQPQV) has biased composition (low complexity). The interaction with ttk stretch occupies residues 241–320 (YQRFPQPSVD…TAISEVLPTA (80 aa)). A coiled-coil region spans residues 319-362 (TARYQVTHEENKENQQAQEMELELEEEEEVDGRAELEVVQEAEA). Positions 346-382 (EEVDGRAELEVVQEAEAPLEPQSHHKQGNSHQNSHQA) are disordered.

Component of some E3 complex at least composed of sina, ebi and phyl, required for the degradation of ttk. In embryos, it is ubiquitously present before cellularization. During stages 9-11, it is expressed in neuroblasts and the SOP cells. From stage 12 onward, it decreases, but remains in a subset of PNS cells at stages 12-14. Weakly expressed in wing imaginal disks, in the SOP cells of wing margin bristles, notal macrochaetes, and other sensory organs. In leg disks, it is expressed in the precursors of the femoral chordotonal organs, as well as in external sensory SOP cells. Strongly expressed in the eye-antenna disk, it is specifically expressed in R1, R6 and R7 cells, and not in R3, R3, R4, R5 and R8 cells.

It is found in the nucleus. Its function is as follows. Essential adapter component of E3 ubiquitin ligase complexes; involved in R7 photoreceptor cell differentiation, embryonic nervous system, external sensory organ development and specification of particular muscles. E3 ubiquitin ligase complexes mediate ubiquitination and subsequent proteasomal degradation of target proteins. Required for specification of R7 photoreceptor cell fate in the eye by participating in the ubiquitination and subsequent proteasomal degradation of Tramtrack (ttk), a general inhibitor of photoreceptor differentiation. Acts downstream of Notch signaling to specify the fate of the SOP (sensory organ precursor) cells and their progeny, probably via the sina-mediated proteasomal degradation of ttk. Its restricted pattern of expression, upon Notch and Ras signaling pathways, suggests that it acts as a key determinant in E3 complexes to trigger protein proteolysis in appropriate cells. The chain is Protein phyllopod (phyl) from Drosophila melanogaster (Fruit fly).